Reading from the N-terminus, the 523-residue chain is ATP-dependent RNA helicase DBP3 (523 aa).

Over residues 1–21 (MTKEEIADKKRKVVDEEVIEK) the composition is skewed to basic and acidic residues. Positions 1-71 (MTKEEIADKK…SEKKPEPTSA (71 aa)) are disordered. Residues 22 to 48 (KKSKKHKKDKKDKKEKKDKKHKKHKKE) show a composition bias toward basic residues. Residues 49 to 67 (KKGEKEVEVPEKESEKKPE) are compositionally biased toward basic and acidic residues. The Q motif motif lies at 114 to 140 (LSFDYLSLDSSIQAEISKFPKPTPIQA). The 173-residue stretch at 143-315 (WPYLLSGKDV…STFMNNPIKV (173 aa)) folds into the Helicase ATP-binding domain. Residue 156–163 (AETGSGKT) coordinates ATP. Positions 262 to 265 (DEAD) match the DEAD box motif. One can recognise a Helicase C-terminal domain in the interval 344–493 (KLLELLKKYH…PVPEDLIKFG (150 aa)).

This sequence belongs to the DEAD box helicase family. DDX5/DBP2 subfamily.

It is found in the nucleus. The protein resides in the nucleolus. The enzyme catalyses ATP + H2O = ADP + phosphate + H(+). In terms of biological role, ATP-dependent RNA helicase required for 60S ribosomal subunit synthesis. Involved in efficient pre-rRNA processing, predominantly at site A3, which is necessary for the normal formation of 25S and 5.8S rRNAs. The chain is ATP-dependent RNA helicase DBP3 (DBP3) from Saccharomyces cerevisiae (strain ATCC 204508 / S288c) (Baker's yeast).